The primary structure comprises 693 residues: TGF-beta-activated kinase 1 and MAP3K7-binding protein 2 (693 aa).

Positions 8-51 constitute a CUE domain; it reads IDFQVLHDLRQKFPEVPEVVVSRCMLQNNNNLDACCAVLSQEST. The tract at residues 91-130 is disordered; it reads GREGSRMNGSRTLTHSISDGQLQGGQSNSELFQQEPQTAP. Residues 97 to 130 are compositionally biased toward polar residues; sequence MNGSRTLTHSISDGQLQGGQSNSELFQQEPQTAP. An Asymmetric dimethylarginine modification is found at Arg173. Residues 219–310 form a disordered region; the sequence is ITTPGGTTRQ…SGSSQSSAHS (92 aa). Low complexity predominate over residues 220–231; sequence TTPGGTTRQTQQ. Residues 232-282 show a composition bias toward polar residues; that stretch reads HSGWVSQFNPMNPQQVYQPSQPGPWTTCPASNPLSHTSSQQPNQQGHQTSH. Over residues 286–310 the composition is skewed to low complexity; the sequence is PISSPTTSQPPTIHSSGSSQSSAHS. Lys329 participates in a covalent cross-link: Glycyl lysine isopeptide (Lys-Gly) (interchain with G-Cter in SUMO). Positions 330-381 are disordered; the sequence is LEPPQRNNSSKLRSSGPRTSSTSSSVNSQTLNRNQPTVYIAASPPNTDELMS. Low complexity predominate over residues 343–359; it reads SSGPRTSSTSSSVNSQT. 4 positions are modified to phosphoserine: Ser372, Ser450, Ser482, and Ser524. Residues 532–619 are a coiled coil; the sequence is YTQALLVHQK…TKEIDLFQAR (88 aa). Residue Lys562 forms a Glycyl lysine isopeptide (Lys-Gly) (interchain with G-Cter in SUMO) linkage. Ser582 is modified (phosphoserine). Lys611 is covalently cross-linked (Glycyl lysine isopeptide (Lys-Gly) (interchain with G-Cter in ubiquitin)). The interval 642 to 663 is disordered; that stretch reads PPKPKDQRSIIKTPKTQDTEDD. A RanBP2-type zinc finger spans residues 663–693; it reads DEGAQWNCTACTFLNHPALIRCEQCEMPRHF. Cys673 carries the (Microbial infection) S-methylcysteine modification. The segment at 675–685 is interaction with polyubiquitin; sequence FLNHPALIRCE.

As to quaternary structure, interacts with MAP3K7 and TRAF6. Identified in the TRIKA2 complex composed of MAP3K7, TAB1 and TAB2. Binds 'Lys-63'-linked polyubiquitin chains. Interacts with NCOR1 and HDAC3 to form a ternary complex. Interacts (via C-terminal) with NUMBL (via PTB domain). Interacts (via the C-terminus) with DYNC2I2 (via WD domains). Interacts with RBCK1. Interacts with TRIM5. Interacts with TRIM38 (via B30.2/SPRY domain), leading to its translocation to lysosomes and degradation. Interacts with ASB1; this interaction promotes TAB2 stability. In terms of processing, degraded in a lysosome-dependent manner following interaction with TRIM38. Post-translationally, SUMOylated by TRIM60; leading to inhibition of MAPK/NF-kappaB activation and the innate immune response. Ubiquitinated; following IL1 stimulation or TRAF6 overexpression. Ubiquitination involves RBCK1 leading to proteasomal degradation. Ubiquitinated at Lys-611 by TRIM45 leading to proteasomal degradation. In terms of processing, phosphorylated. Post-translationally, (Microbial infection) Methylated at Cys-673 by enteropathogenic E.coli protein NleE or S.flexneri protein OspZ: methylation disrupts zinc-binding and ability to bind 'Lys-63'-linked ubiquitin, leading to NF-kappa-B inactivation. Widely expressed. In the embryo, expressed in the ventricular trabeculae, endothelial cells of the conotruncal cushions of the outflow tract and in the endothelial cells lining the developing aortic valves.

It is found in the membrane. Its subcellular location is the endosome membrane. It localises to the lysosome membrane. The protein localises to the cytoplasm. The protein resides in the cytosol. Adapter required to activate the JNK and NF-kappa-B signaling pathways through the specific recognition of 'Lys-63'-linked polyubiquitin chains by its RanBP2-type zinc finger (NZF). Acts as an adapter linking MAP3K7/TAK1 and TRAF6 to 'Lys-63'-linked polyubiquitin chains. The RanBP2-type zinc finger (NZF) specifically recognizes Lys-63'-linked polyubiquitin chains unanchored or anchored to the substrate proteins such as RIPK1/RIP1 and RIPK2: this acts as a scaffold to organize a large signaling complex to promote autophosphorylation of MAP3K7/TAK1, and subsequent activation of I-kappa-B-kinase (IKK) core complex by MAP3K7/TAK1. Also recognizes and binds Lys-63'-linked polyubiquitin chains of heterotypic 'Lys-63'-/'Lys-48'-linked branched ubiquitin chains. Regulates the IL1-mediated translocation of NCOR1 out of the nucleus. Involved in heart development. In Homo sapiens (Human), this protein is TGF-beta-activated kinase 1 and MAP3K7-binding protein 2.